Here is a 346-residue protein sequence, read N- to C-terminus: Dimethyladenosine transferase 1, mitochondrial (346 aa).

Residues 1-27 (MATQGVLAKYRLPPLPTIGEIIKLFNL) constitute a mitochondrion transit peptide. S-adenosyl-L-methionine-binding residues include Asn36, Leu38, Gly63, Glu85, Lys86, Asp111, Ile112, and Asn141.

It belongs to the class I-like SAM-binding methyltransferase superfamily. rRNA adenine N(6)-methyltransferase family. KsgA subfamily.

Its subcellular location is the mitochondrion. The enzyme catalyses adenosine(N)/adenosine(N+1) in rRNA + 4 S-adenosyl-L-methionine = N(6)-dimethyladenosine(N)/N(6)-dimethyladenosine(N+1) in rRNA + 4 S-adenosyl-L-homocysteine + 4 H(+). Functionally, mitochondrial methyltransferase which uses S-adenosyl methionine to dimethylate two highly conserved adjacent adenosine residues (A1583 and A1584) within the loop of helix 45 at the 3-prime end of 12S rRNA, thereby regulating the assembly or stability of the small subunit of the mitochondrial ribosome. Also required for basal transcription of mitochondrial DNA, probably via its interaction with POLRMT and TFAM. Stimulates transcription independently of the methyltransferase activity. The protein is Dimethyladenosine transferase 1, mitochondrial (tfb1m) of Xenopus tropicalis (Western clawed frog).